The following is a 289-amino-acid chain: Rhodopsin (289 aa).

Over 1–7 (YLVSPAA) the chain is Extracellular. Residues 8 to 32 (YAALGAYMFLLILVGFPVNFLTLYV) traverse the membrane as a helical segment. Residues 33 to 44 (TLDHKKLRTPLN) lie on the Cytoplasmic side of the membrane. The chain crosses the membrane as a helical span at residues 45-67 (YILLNLAVADLFMVLGGFTTTMY). Topologically, residues 68–81 (TSMHGYFVLGRLGC) are extracellular. Cysteine 81 and cysteine 158 are disulfide-bonded. A helical transmembrane segment spans residues 82–104 (NLEGFFATLGGEIALWSLVVLAI). Residues 105-107 (ERW) carry the 'Ionic lock' involved in activated form stabilization motif. At 105 to 123 (ERWIVVCKPISNFRFTEDH) the chain is on the cytoplasmic side. The chain crosses the membrane as a helical span at residues 124-144 (AIMGLAFSWVMALTCAVPPLV). Over 145–173 (GWSRYIPEGMQCSCGVDYYTRAEGFNTES) the chain is Extracellular. The helical transmembrane segment at 174–195 (FVLYMFTVHFLIPLSVIFFCYG) threads the bilayer. Residues 196–223 (RLLCAVKEAAAAQQESETTQRAEKEVSR) are Cytoplasmic-facing. The helical transmembrane segment at 224–245 (MVVLMVIGFLVCWLPYASVAWW) threads the bilayer. Over 246–257 (IFCNQGSEFGPI) the chain is Extracellular. Residues 258–279 (FMTLPAFFAKTSAIYNPLIYIC) form a helical membrane-spanning segment. Residue lysine 267 is modified to N6-(retinylidene)lysine. The Cytoplasmic segment spans residues 280–289 (MNKQFRHCMI).

Belongs to the G-protein coupled receptor 1 family. Opsin subfamily. Post-translationally, phosphorylated on some or all of the serine and threonine residues present in the C-terminal region. In terms of processing, contains one covalently linked retinal chromophore.

Its subcellular location is the membrane. It is found in the cell projection. It localises to the cilium. The protein resides in the photoreceptor outer segment. Functionally, photoreceptor required for image-forming vision at low light intensity. While most salt water fish species use retinal as chromophore, most freshwater fish use 3-dehydroretinal, or a mixture of retinal and 3-dehydroretinal. Light-induced isomerization of 11-cis to all-trans retinal triggers a conformational change that activates signaling via G-proteins. Subsequent receptor phosphorylation mediates displacement of the bound G-protein alpha subunit by arrestin and terminates signaling. The protein is Rhodopsin (rho) of Procottus jeittelesii (Red sculpin).